The sequence spans 215 residues: UPF0502 protein YceH (215 aa).

This sequence belongs to the UPF0502 family.

This is UPF0502 protein YceH from Salmonella schwarzengrund (strain CVM19633).